Consider the following 696-residue polypeptide: L-amino-acid oxidase (696 aa).

Residues 1–130 (MKWSAAAGAA…IKMRRDLKAR (130 aa)) constitute a propeptide that is removed on maturation. Residues Glu207, Arg215, 236 to 237 (MR), and Val440 each bind FAD. Arg237 is a binding site for substrate. Tyr564 is a substrate binding site. FAD is bound by residues Glu649 and 658 to 661 (IASA).

This sequence belongs to the flavin monoamine oxidase family. Requires FAD as cofactor.

The enzyme catalyses an L-alpha-amino acid + O2 + H2O = a 2-oxocarboxylate + H2O2 + NH4(+). The chain is L-amino-acid oxidase (lox) from Neurospora crassa (strain ATCC 24698 / 74-OR23-1A / CBS 708.71 / DSM 1257 / FGSC 987).